Here is a 542-residue protein sequence, read N- to C-terminus: Cytochrome P450 734A6 (542 aa).

Residues 2 to 22 (GWWGWAAAAAAAAAWVAVKVL) traverse the membrane as a helical segment. Heme is bound at residue C474.

The protein belongs to the cytochrome P450 family. Heme serves as cofactor. As to expression, highly expressed in leaf sheaths. Expressed in roots, shoot apex, leaf blades, internodes and panicles.

The protein localises to the membrane. Functionally, cytochrome P450 involved in brassinosteroids (BRs) inactivation and regulation of BRs homeostasis. Is a multifunctional and multisubstrate enzyme that controls the endogenous bioactive BR content both by direct inactivation of castasterone (CS) and by decreasing the levels of BR precursors. Catalyzes the oxidation of carbon 22 hydroxylated BR intermediates to produce C26 oxidized metabolites. The sequence is that of Cytochrome P450 734A6 (CYP734A6) from Oryza sativa subsp. japonica (Rice).